The sequence spans 335 residues: DNA-directed RNA polymerase subunit alpha (335 aa).

The tract at residues 1-233 (MQRNWRELIK…DQLTIFINFE (233 aa)) is alpha N-terminal domain (alpha-NTD). Positions 249–335 (FNDHLFRSVD…DIENRRKEQE (87 aa)) are alpha C-terminal domain (alpha-CTD).

Belongs to the RNA polymerase alpha chain family. Homodimer. The RNAP catalytic core consists of 2 alpha, 1 beta, 1 beta' and 1 omega subunit. When a sigma factor is associated with the core the holoenzyme is formed, which can initiate transcription.

The catalysed reaction is RNA(n) + a ribonucleoside 5'-triphosphate = RNA(n+1) + diphosphate. In terms of biological role, DNA-dependent RNA polymerase catalyzes the transcription of DNA into RNA using the four ribonucleoside triphosphates as substrates. This is DNA-directed RNA polymerase subunit alpha from Syntrophobacter fumaroxidans (strain DSM 10017 / MPOB).